A 59-amino-acid chain; its full sequence is MAKLKITLVKSLIGRPESQRVTVRTLGLTRTNSSVIKEDTPQIRGMINKVAHLLKVEEA.

It belongs to the universal ribosomal protein uL30 family. In terms of assembly, part of the 50S ribosomal subunit.

The chain is Large ribosomal subunit protein uL30 from Pelotomaculum thermopropionicum (strain DSM 13744 / JCM 10971 / SI).